The following is a 364-amino-acid chain: Developmentally-regulated GTP-binding protein 2 homolog (364 aa).

The OBG-type G domain occupies alanine 63–asparagine 288. GTP contacts are provided by residues glycine 69 to serine 76, aspartate 115 to isoleucine 119, and asparagine 246 to aspartate 249. The region spanning asparagine 288 to lysine 363 is the TGS domain.

The protein belongs to the TRAFAC class OBG-HflX-like GTPase superfamily. OBG GTPase family.

The polypeptide is Developmentally-regulated GTP-binding protein 2 homolog (drg2) (Dictyostelium discoideum (Social amoeba)).